Reading from the N-terminus, the 888-residue chain is Interference hedgehog (888 aa).

Positions 1–24 (MSLTRFSLCLLLTLLLAAIPVYLA) are cleaved as a signal peptide. Topologically, residues 25–688 (SPDPGVRILR…SHNETFNLNP (664 aa)) are extracellular. 4 Ig-like C2-type domains span residues 28-123 (PGVR…ARLE), 134-215 (EGFK…VRLA), 234-321 (PHLL…SIQL), and 327-414 (PRIV…LQVN). Intrachain disulfides connect cysteine 51/cysteine 106, cysteine 155/cysteine 203, and cysteine 257/cysteine 305. 8 N-linked (GlcNAc...) asparagine glycosylation sites follow: asparagine 80, asparagine 185, asparagine 192, asparagine 281, asparagine 336, asparagine 365, asparagine 369, and asparagine 455. Cysteines 348 and 396 form a disulfide. 2 Fibronectin type-III domains span residues 450–557 (PPSA…LQRG) and 565–660 (VPSL…TQRP). 2 residues coordinate heparin: arginine 486 and lysine 493. Residue asparagine 516 is glycosylated (N-linked (GlcNAc...) asparagine). Arginine 531 is a heparin binding site. N-linked (GlcNAc...) asparagine glycosylation is present at asparagine 547. The span at 655 to 667 (GRTQRPRVSTTTE) shows a compositional bias: polar residues. Positions 655–679 (GRTQRPRVSTTTEPAVHAMDTTTPS) are disordered. A glycan (N-linked (GlcNAc...) asparagine) is linked at asparagine 681. The chain crosses the membrane as a helical span at residues 689–709 (LLTGTIGGGALLVLLVVSACL). Topologically, residues 710–888 (CLCRRRSSRG…SSGSLNSVGV (179 aa)) are cytoplasmic. Disordered stretches follow at residues 759–789 (AQQQ…DMSY), 812–864 (SSSL…PGRV), and 869–888 (ARLS…SVGV). The span at 760–775 (QQQQQQQQQQQQQQQQ) shows a compositional bias: low complexity. The span at 843–859 (QPTDGSTADSPRLQASN) shows a compositional bias: polar residues. A compositionally biased stretch (low complexity) spans 872-888 (SSRSENLSSGSLNSVGV).

This sequence belongs to the immunoglobulin superfamily. IHOG family. In terms of assembly, homodimer. Heterotetramer; 2 iHog chains bind 2 hh chains when facilitated by heparin, heparin is required to promote high-affinity interactions between hh and iHog.

The protein resides in the membrane. Mediates response to the active Hedgehog (Hh) protein signal in embryos, functioning upstream or at the level of patched (ptc). The chain is Interference hedgehog from Drosophila grimshawi (Hawaiian fruit fly).